A 164-amino-acid polypeptide reads, in one-letter code: 17.8 kDa heat shock protein (164 aa).

The 135-residue stretch at 20-154 folds into the sHSP domain; the sequence is VVAGEARPPM…HAGNGKAAGD (135 aa). The tract at residues 68–93 is disordered; that stretch reads GEHEDANNAAKAGKASGEEEEENDGV.

The protein belongs to the small heat shock protein (HSP20) family. May form oligomeric structures.

The protein resides in the cytoplasm. The chain is 17.8 kDa heat shock protein (HSP17.8) from Oryza sativa subsp. japonica (Rice).